The primary structure comprises 538 residues: MEIKEISVPQQGVVADYMNGKKEIQSCFDYMLTEDAFKQRVQDLREREFFRQDLVTHLLEYNTKLQAGEATIQNVKALGDENTYVVIAGQQAGLLTGPLYTIHKIISVLQLAKEKEESLGVKVVPVFWIAGEDHDMDEINHTFVTKNKKIKKTIFHDRNPKKASASESELSLEDCRKWIEEIFKTYPETNFTKDVLQFVDDSLRKSNTYVDFFGHLIMKMFVNSGLILVDSHHPELRKLEVPFFKQIVSKYKEVQEGLHNQQEVIKELGYKPIIETKSNVVHIFMEIDNERVLLEDNQGKFVGKDGTYSFSYEELIEEMERSPERFSNNVVTRPLMQEYVFPTLAFIGGPGELAYWSELQQVFHTIGFRMPPVVPRITITYIERDIATDLHDLQLQERDPFLNNVDKLRENWLSNQIEEPIDDRFVEAKKEIMNIHTSLQQFVKEIDPGLSAFAGKNEFKINEQIELLERMLKRNVEKKHEVELNKFRRIQFALRPLGAPQERVWNVCYYLNQFGLDFVDRVMEKPFSWNGKHHVIKL.

A coiled-coil region spans residues 460-484; the sequence is KINEQIELLERMLKRNVEKKHEVEL.

Belongs to the BshC family.

Its function is as follows. Involved in bacillithiol (BSH) biosynthesis. May catalyze the last step of the pathway, the addition of cysteine to glucosamine malate (GlcN-Mal) to generate BSH. The protein is Putative cysteine ligase BshC of Bacillus cereus (strain AH820).